The primary structure comprises 1096 residues: Serine/threonine-protein kinase mig-15 (1096 aa).

A Protein kinase domain is found at 21–288 (FELIEVVGNG…TGALLRHPFI (268 aa)). ATP-binding positions include 27 to 35 (VGNGTYGQV) and Lys50. Residue Asp151 is the Proton acceptor of the active site. Basic and acidic residues predominate over residues 293–315 (HEQTIRHSIKEHIDRNRRVKKDD). Disordered stretches follow at residues 293–351 (HEQT…MIPM), 380–492 (LPQQ…QQSR), 517–545 (KMGG…EASI), and 574–664 (NGEG…DLLP). Acidic residues predominate over residues 316 to 328 (ADYEYSGSEDDEP). Positions 380–393 (LPQQPAPAPFQYQQ) are enriched in low complexity. Composition is skewed to basic and acidic residues over residues 397 to 408 (VEPRRESSEVKL) and 453 to 472 (NYEK…ERQA). A compositionally biased stretch (pro residues) spans 532 to 541 (SPPPPAPPPR). Residues 629–642 (LDDDDSDSDNEEGN) show a composition bias toward acidic residues. In terms of domain architecture, CNH spans 778–1070 (SGEILCAALW…KFLCERNDKV (293 aa)).

It belongs to the protein kinase superfamily. STE Ser/Thr protein kinase family. STE20 subfamily.

The enzyme catalyses L-seryl-[protein] + ATP = O-phospho-L-seryl-[protein] + ADP + H(+). The catalysed reaction is L-threonyl-[protein] + ATP = O-phospho-L-threonyl-[protein] + ADP + H(+). In terms of biological role, involved in cell migration and signal transduction. Important in several developmental processes including epidermal development, Q neuroblast migrations and muscle arm targeting. Required with ina-1/pat-3 to stabilize the commissural axons growth cone along a precise direction and are required for the cell to respond appropriately when signaling in the growth cone must change. During gonad morphogenesis, involved in distal tip cell (DTC) migration from the dorsal side of the hermaphrodite body to the midbody to allow for formation of gonad arms. The polypeptide is Serine/threonine-protein kinase mig-15 (mig-15) (Caenorhabditis elegans).